We begin with the raw amino-acid sequence, 290 residues long: Signal recognition particle receptor subunit beta (290 aa).

A helical transmembrane segment spans residues 44 to 64; it reads VLLLALFTLIFIIIISKLFGS. Residues 92-100, 114-117, glycine 140, and alanine 268 contribute to the GTP site; these read GLSNAGKTA and THTS.

It belongs to the SRP receptor beta subunit family. As to quaternary structure, heterodimer of an alpha and a beta chain.

The protein resides in the endoplasmic reticulum membrane. Functionally, component of the signal recognition particle (SRP) complex receptor (SR). Ensures, in conjunction with the SRP complex, the correct targeting of the nascent secretory proteins to the endoplasmic reticulum membrane system. May mediate the membrane association of SR. This Dictyostelium discoideum (Social amoeba) protein is Signal recognition particle receptor subunit beta (srprb).